The primary structure comprises 654 residues: MEVQTECSEPPPCDPQPPGKLNKAAFKLFGKRKSGSSMPSIFSVRNKGESTGKAAGKTLELVRSKTHDGLITDTPSELDSHRKEESASSDQLHAGTPDGVSTAPLRSSITKSFSFFSLLRRSSSRAGDGTTTVGRRGRGLKGLFSSMRWRRKPQIQEDTLEVAKEVKEGDLILSSSSGSVKTEKDMTLTLEPLPQVFEESPLPGDSDKWKVASMQGIQGTNEVECGNCGPSVSQQHTVTEESPAPSPLRVQTGGLQNHKHSSSTHLSSIPTCALTPPMEHSTADPQSEQSVDRLCSMFTDVTSLKSFDSLTGCGDIIADPEEDSGNGGSATSSGTGSSSGGCMGRRLSGAGTNSERCSPAKPPLPPQVSSLASIHASCYMPAHQRPRAAPKKPQGSGVVAYMGGGEEMASPEGVDDADMQGLWHMLPQKDEDSPAPRRAEPVLHHAPARLEKRPPQVKALGLSKIPVSGSSKTGKQQPSRPSPPPVDKELQDAPPSDEGYWDSPTPGPEDEDSTFLRRDGLLRDSCSGDALYDLYDPDSPSAAGSDDDASSPTKSAGDLKMNLPSPKCSSSATSSFRSMKGSTSLPRDSKIPISVRQTPPSHSSSQGALSSNLSPTSTTPPKKTDAPPRTKIPVSKVPVRRSGGKSTSTSQSRK.

Disordered regions lie at residues 1-105, 224-289, 316-369, and 381-654; these read MEVQ…TAPL, ECGN…QSEQ, IIAD…PQVS, and PAHQ…QSRK. Positions 9 to 18 are enriched in pro residues; the sequence is EPPPCDPQPP. The span at 60 to 70 shows a compositional bias: basic and acidic residues; the sequence is ELVRSKTHDGL. A compositionally biased stretch (basic and acidic residues) spans 427-454; sequence PQKDEDSPAPRRAEPVLHHAPARLEKRP. The segment covering 468 to 479 has biased composition (polar residues); sequence SGSSKTGKQQPS. The span at 565–575 shows a compositional bias: low complexity; that stretch reads SPKCSSSATSS. The segment covering 576–586 has biased composition (polar residues); that stretch reads FRSMKGSTSLP. The span at 601-621 shows a compositional bias: low complexity; sequence SHSSSQGALSSNLSPTSTTPP. The span at 644–654 shows a compositional bias: polar residues; it reads GKSTSTSQSRK.

The protein belongs to the Amer family.

It localises to the cell membrane. Negative regulator of the canonical Wnt signaling pathway involved in neuroectodermal patterning. Acts by specifically binding phosphatidylinositol 4,5-bisphosphate (PtdIns(4,5)P2), translocating to the cell membrane and interacting with key regulators of the canonical Wnt signaling pathway, such as components of the beta-catenin destruction complex. The sequence is that of APC membrane recruitment protein 2 (amer2) from Danio rerio (Zebrafish).